We begin with the raw amino-acid sequence, 297 residues long: Protoheme IX farnesyltransferase (297 aa).

A run of 9 helical transmembrane segments spans residues 23 to 43, 49 to 69, 90 to 110, 117 to 137, 144 to 164, 171 to 191, 215 to 235, 238 to 258, and 277 to 297; these read VTQL…PGLP, VFGT…NCLI, ISAA…MLVL, LTMW…TVIL, NIVI…AAVA, AWVL…ALAL, RLHI…PYII, SGLL…AYAW, and ILYL…GLLA.

The protein belongs to the UbiA prenyltransferase family. Protoheme IX farnesyltransferase subfamily.

It is found in the cell inner membrane. The catalysed reaction is heme b + (2E,6E)-farnesyl diphosphate + H2O = Fe(II)-heme o + diphosphate. It functions in the pathway porphyrin-containing compound metabolism; heme O biosynthesis; heme O from protoheme: step 1/1. In terms of biological role, converts heme B (protoheme IX) to heme O by substitution of the vinyl group on carbon 2 of heme B porphyrin ring with a hydroxyethyl farnesyl side group. The sequence is that of Protoheme IX farnesyltransferase from Bordetella petrii (strain ATCC BAA-461 / DSM 12804 / CCUG 43448).